The sequence spans 295 residues: Ethanolamine ammonia-lyase small subunit (295 aa).

3 residues coordinate adenosylcob(III)alamin: Val-207, Glu-228, and Cys-258.

Belongs to the EutC family. The basic unit is a heterodimer which dimerizes to form tetramers. The heterotetramers trimerize; 6 large subunits form a core ring with 6 small subunits projecting outwards. It depends on adenosylcob(III)alamin as a cofactor.

The protein resides in the bacterial microcompartment. The catalysed reaction is ethanolamine = acetaldehyde + NH4(+). Its pathway is amine and polyamine degradation; ethanolamine degradation. Its function is as follows. Catalyzes the deamination of various vicinal amino-alcohols to oxo compounds. Allows this organism to utilize ethanolamine as the sole source of nitrogen and carbon in the presence of external vitamin B12. The chain is Ethanolamine ammonia-lyase small subunit from Escherichia fergusonii (strain ATCC 35469 / DSM 13698 / CCUG 18766 / IAM 14443 / JCM 21226 / LMG 7866 / NBRC 102419 / NCTC 12128 / CDC 0568-73).